The primary structure comprises 786 residues: LPS-assembly protein LptD (786 aa).

An N-terminal signal peptide occupies residues Met1–Ala39. The interval Pro767 to Glu786 is disordered. Over residues Thr770–Met779 the composition is skewed to pro residues.

This sequence belongs to the LptD family. As to quaternary structure, component of the lipopolysaccharide transport and assembly complex. Interacts with LptE and LptA.

The protein localises to the cell outer membrane. In terms of biological role, together with LptE, is involved in the assembly of lipopolysaccharide (LPS) at the surface of the outer membrane. The polypeptide is LPS-assembly protein LptD (Burkholderia cenocepacia (strain HI2424)).